A 150-amino-acid polypeptide reads, in one-letter code: 3-hydroxyacyl-[acyl-carrier-protein] dehydratase FabZ (150 aa).

H52 is a catalytic residue.

It belongs to the thioester dehydratase family. FabZ subfamily.

The protein resides in the cytoplasm. It catalyses the reaction a (3R)-hydroxyacyl-[ACP] = a (2E)-enoyl-[ACP] + H2O. In terms of biological role, involved in unsaturated fatty acids biosynthesis. Catalyzes the dehydration of short chain beta-hydroxyacyl-ACPs and long chain saturated and unsaturated beta-hydroxyacyl-ACPs. The sequence is that of 3-hydroxyacyl-[acyl-carrier-protein] dehydratase FabZ from Cupriavidus metallidurans (strain ATCC 43123 / DSM 2839 / NBRC 102507 / CH34) (Ralstonia metallidurans).